The primary structure comprises 237 residues: Uridylate kinase (237 aa).

12-15 (KLSG) contacts ATP. Residues 20–25 (GDEGFG) are involved in allosteric activation by GTP. Glycine 54 lines the UMP pocket. ATP contacts are provided by glycine 55 and arginine 59. UMP-binding positions include aspartate 74 and 135–142 (TGSPFFTT). ATP contacts are provided by threonine 162, tyrosine 168, and aspartate 171.

Belongs to the UMP kinase family. In terms of assembly, homohexamer.

The protein resides in the cytoplasm. It catalyses the reaction UMP + ATP = UDP + ADP. The protein operates within pyrimidine metabolism; CTP biosynthesis via de novo pathway; UDP from UMP (UMPK route): step 1/1. With respect to regulation, allosterically activated by GTP. Inhibited by UTP. Functionally, catalyzes the reversible phosphorylation of UMP to UDP. The chain is Uridylate kinase from Actinobacillus pleuropneumoniae serotype 5b (strain L20).